We begin with the raw amino-acid sequence, 1037 residues long: Tyrosine-protein kinase-like otk (1037 aa).

Residues M1–S22 form the signal peptide. Residues N23 and N39 are each glycosylated (N-linked (GlcNAc...) asparagine). Residues N23 to A582 are Extracellular-facing. Ig-like C2-type domains are found at residues S25–S115, L114–S200, P252–N366, P369–N464, and P469–V559. 4 cysteine pairs are disulfide-bonded: C46–C96, C138–C189, C277–C355, and C400–C448. Residues N337, N418, N430, N445, N458, N513, and N525 are each glycosylated (N-linked (GlcNAc...) asparagine). Cysteines 491 and 543 form a disulfide. A helical membrane pass occupies residues V583–W603. Residues C604–K1037 lie on the Cytoplasmic side of the membrane. 2 disordered regions span residues L618 to A681 and A719 to M764. The span at Q653 to R675 shows a compositional bias: polar residues. A Phosphoserine modification is found at S680. In terms of domain architecture, Protein kinase; inactive spans L694–L1035. Positions S724–S735 are enriched in basic and acidic residues.

The protein belongs to the protein kinase superfamily. Tyr protein kinase family. Insulin receptor subfamily. As to quaternary structure, interacts with plexA; component of a receptor complex that mediates the repulsive signaling in response to Semaphorin ligands.

The protein localises to the cell membrane. Its function is as follows. Acts as a calcium-dependent, homophilic cell adhesion molecule that regulates neural recognition during the development of the nervous system. Component of the repulsive Plexin signaling response to regulate motor axon guidance at the embryonic stage. Also component of a receptor complex that is required in the adult visual system to innervate the lamina layer; specific targeting of R1-R6 axons. The polypeptide is Tyrosine-protein kinase-like otk (Drosophila ananassae (Fruit fly)).